Reading from the N-terminus, the 306-residue chain is MELTFLGTSAGVPTRTRNMTSIILNLQQPTRAEMWLFDCGEGTQHQFLHTPYHPGKLNKIFITHLHGDHLFGLPGLLCSRSMQGNSLPLTLYGPKGLKEFVETALRLSGSWTDYPLTIIEVGPGLVFDEEGYRVTAYPLSHPVECYGYRIEQHDKPGTLDAAQLIADGVPPGPLFHQLKRGQRVTLEDGRVIDGSRYLGPATPGKTLAIFGDTAPCPQALEMARGADVMVHETTLEQAMAEKANSRGHSSSQQTAALAKEAGVGTLIATHFSSRYDAEGCLKMLAECREIFANTLLAEDFMVYKMA.

Positions 64, 66, 68, 69, 141, 212, and 270 each coordinate Zn(2+). Aspartate 68 acts as the Proton acceptor in catalysis.

It belongs to the RNase Z family. RNase BN subfamily. In terms of assembly, homodimer. It depends on Zn(2+) as a cofactor.

In terms of biological role, zinc phosphodiesterase, which has both exoribonuclease and endoribonuclease activities. This is Ribonuclease BN from Klebsiella pneumoniae (strain 342).